A 556-amino-acid polypeptide reads, in one-letter code: Membrane protein insertase YidC (556 aa).

A run of 5 helical transmembrane segments spans residues 6–26 (IVLY…WQID), 332–352 (LDLT…FSLM), 358–378 (VVGN…LAFY), 428–448 (LGGC…YWVL), and 501–521 (VMMF…SGLV).

This sequence belongs to the OXA1/ALB3/YidC family. Type 1 subfamily. As to quaternary structure, interacts with the Sec translocase complex via SecD. Specifically interacts with transmembrane segments of nascent integral membrane proteins during membrane integration.

It localises to the cell inner membrane. Its function is as follows. Required for the insertion and/or proper folding and/or complex formation of integral membrane proteins into the membrane. Involved in integration of membrane proteins that insert both dependently and independently of the Sec translocase complex, as well as at least some lipoproteins. Aids folding of multispanning membrane proteins. This chain is Membrane protein insertase YidC, found in Legionella pneumophila (strain Lens).